Reading from the N-terminus, the 543-residue chain is MRVLPATLLVGAATAAAPPFQQILGLPKKSADTLAKPLHDLQEQLKTLSGEARHLWDEVASHFPNNMDHNPVFSLPKKHTRRPDSHWDHIVRGADVQSVWVAGASGEKEREIDGKLEAYDLRVKKTDPSALGIDPGVKQYTGYLDDNENDKHLFYWFFESRNDPKNDPVVLWLNGGPGCSSLTGLFLELGPSSINEKIKPIYNDFAWNSNASVIFLDQPVNVGYSYSGAAVSDTVAAGKDVYALLTLFFKQFPEYAKQDFHIAGESYAGHYIPVFASEILSHKKRNINLKSVLIGNGLTDGLTQYDYYRPMACGEGGYPAVLDESSCQSMDNALPRCKSMIESCYNTESSWICVPASIYCNNALLGPYQRTGQNVYDIRGKCEDSSNLCYKGMGYVSEYLNKREVREAVGAEVDGYESCNFDINRNFLFHGDWMKPYHRLVPGLLEQIPVLIYAGDADFICNWLGNKAWTEALEWPGQKEYAPLPLKDLVIEENEHKGKKIGQIKSHGNFTFMRLYGAGHMVPMDQPEASLEFFNRWLGGEWF.

The N-terminal stretch at 1 to 17 (MRVLPATLLVGAATAAA) is a signal peptide. Positions 18 to 124 (PPFQQILGLP…KLEAYDLRVK (107 aa)) are excised as a propeptide. Intrachain disulfides connect C179/C419, C313/C327, C337/C360, C344/C353, and C382/C389. Residue N210 is glycosylated (N-linked (GlcNAc...) asparagine). Residue S266 is part of the active site. D458 is an active-site residue. An N-linked (GlcNAc...) asparagine glycan is attached at N509. H520 is an active-site residue.

Belongs to the peptidase S10 family.

It localises to the vacuole. The enzyme catalyses Release of a C-terminal amino acid with broad specificity.. Functionally, vacuolar carboxypeptidase involved in degradation of small peptides. Digests preferentially peptides containing an aliphatic or hydrophobic residue in P1' position, as well as methionine, leucine or phenylalanine in P1 position of ester substrate. The chain is Carboxypeptidase Y homolog A (cpyA) from Aspergillus fumigatus (strain ATCC MYA-4609 / CBS 101355 / FGSC A1100 / Af293) (Neosartorya fumigata).